Reading from the N-terminus, the 405-residue chain is Tryptophan synthase beta chain (405 aa).

An N6-(pyridoxal phosphate)lysine modification is found at Lys-95.

The protein belongs to the TrpB family. In terms of assembly, tetramer of two alpha and two beta chains. Pyridoxal 5'-phosphate is required as a cofactor.

It catalyses the reaction (1S,2R)-1-C-(indol-3-yl)glycerol 3-phosphate + L-serine = D-glyceraldehyde 3-phosphate + L-tryptophan + H2O. It participates in amino-acid biosynthesis; L-tryptophan biosynthesis; L-tryptophan from chorismate: step 5/5. Functionally, the beta subunit is responsible for the synthesis of L-tryptophan from indole and L-serine. This chain is Tryptophan synthase beta chain (trpB), found in Pseudomonas putida (Arthrobacter siderocapsulatus).